Consider the following 369-residue polypeptide: UDP-N-acetylglucosamine--N-acetylmuramyl-(pentapeptide) pyrophosphoryl-undecaprenol N-acetylglucosamine transferase (369 aa).

Residues 15-17 (TGG), N126, R169, S197, and Q299 contribute to the UDP-N-acetyl-alpha-D-glucosamine site.

This sequence belongs to the glycosyltransferase 28 family. MurG subfamily.

It localises to the cell inner membrane. The catalysed reaction is di-trans,octa-cis-undecaprenyl diphospho-N-acetyl-alpha-D-muramoyl-L-alanyl-D-glutamyl-meso-2,6-diaminopimeloyl-D-alanyl-D-alanine + UDP-N-acetyl-alpha-D-glucosamine = di-trans,octa-cis-undecaprenyl diphospho-[N-acetyl-alpha-D-glucosaminyl-(1-&gt;4)]-N-acetyl-alpha-D-muramoyl-L-alanyl-D-glutamyl-meso-2,6-diaminopimeloyl-D-alanyl-D-alanine + UDP + H(+). The protein operates within cell wall biogenesis; peptidoglycan biosynthesis. Its function is as follows. Cell wall formation. Catalyzes the transfer of a GlcNAc subunit on undecaprenyl-pyrophosphoryl-MurNAc-pentapeptide (lipid intermediate I) to form undecaprenyl-pyrophosphoryl-MurNAc-(pentapeptide)GlcNAc (lipid intermediate II). In Methylorubrum extorquens (strain CM4 / NCIMB 13688) (Methylobacterium extorquens), this protein is UDP-N-acetylglucosamine--N-acetylmuramyl-(pentapeptide) pyrophosphoryl-undecaprenol N-acetylglucosamine transferase.